Consider the following 400-residue polypeptide: Tryptophan synthase beta chain (400 aa).

Lysine 91 is modified (N6-(pyridoxal phosphate)lysine).

Belongs to the TrpB family. Tetramer of two alpha and two beta chains. Requires pyridoxal 5'-phosphate as cofactor.

The catalysed reaction is (1S,2R)-1-C-(indol-3-yl)glycerol 3-phosphate + L-serine = D-glyceraldehyde 3-phosphate + L-tryptophan + H2O. Its pathway is amino-acid biosynthesis; L-tryptophan biosynthesis; L-tryptophan from chorismate: step 5/5. Its function is as follows. The beta subunit is responsible for the synthesis of L-tryptophan from indole and L-serine. This Listeria monocytogenes serotype 4a (strain HCC23) protein is Tryptophan synthase beta chain.